Consider the following 238-residue polypeptide: 7-cyano-7-deazaguanine synthase (238 aa).

Residue 12-22 coordinates ATP; sequence FSGGQDSGTCL. Zn(2+) is bound by residues Cys-200, Cys-215, Cys-218, and Cys-221.

It belongs to the QueC family. Requires Zn(2+) as cofactor.

The catalysed reaction is 7-carboxy-7-deazaguanine + NH4(+) + ATP = 7-cyano-7-deazaguanine + ADP + phosphate + H2O + H(+). It functions in the pathway purine metabolism; 7-cyano-7-deazaguanine biosynthesis. Its function is as follows. Catalyzes the ATP-dependent conversion of 7-carboxy-7-deazaguanine (CDG) to 7-cyano-7-deazaguanine (preQ(0)). The polypeptide is 7-cyano-7-deazaguanine synthase (Lawsonia intracellularis (strain PHE/MN1-00)).